Consider the following 56-residue polypeptide: UPF0339 protein NMA1193/NMA1859 (56 aa).

This sequence belongs to the UPF0339 family.

The protein is UPF0339 protein NMA1193/NMA1859 of Neisseria meningitidis serogroup A / serotype 4A (strain DSM 15465 / Z2491).